Here is a 262-residue protein sequence, read N- to C-terminus: Acyl-[acyl-carrier-protein]--UDP-N-acetylglucosamine O-acyltransferase (262 aa).

Belongs to the transferase hexapeptide repeat family. LpxA subfamily. Homotrimer.

Its subcellular location is the cytoplasm. The catalysed reaction is a (3R)-hydroxyacyl-[ACP] + UDP-N-acetyl-alpha-D-glucosamine = a UDP-3-O-[(3R)-3-hydroxyacyl]-N-acetyl-alpha-D-glucosamine + holo-[ACP]. It participates in glycolipid biosynthesis; lipid IV(A) biosynthesis; lipid IV(A) from (3R)-3-hydroxytetradecanoyl-[acyl-carrier-protein] and UDP-N-acetyl-alpha-D-glucosamine: step 1/6. Involved in the biosynthesis of lipid A, a phosphorylated glycolipid that anchors the lipopolysaccharide to the outer membrane of the cell. This is Acyl-[acyl-carrier-protein]--UDP-N-acetylglucosamine O-acyltransferase from Burkholderia ambifaria (strain ATCC BAA-244 / DSM 16087 / CCUG 44356 / LMG 19182 / AMMD) (Burkholderia cepacia (strain AMMD)).